A 165-amino-acid polypeptide reads, in one-letter code: NADH-quinone oxidoreductase subunit I (165 aa).

2 4Fe-4S ferredoxin-type domains span residues 57-86 (RRYD…IESE) and 96-125 (SRYD…ETHI). [4Fe-4S] cluster contacts are provided by C66, C69, C72, C76, C105, C108, C111, and C115.

It belongs to the complex I 23 kDa subunit family. In terms of assembly, NDH-1 is composed of 14 different subunits. Subunits NuoA, H, J, K, L, M, N constitute the membrane sector of the complex. The cofactor is [4Fe-4S] cluster.

The protein localises to the cell inner membrane. It carries out the reaction a quinone + NADH + 5 H(+)(in) = a quinol + NAD(+) + 4 H(+)(out). In terms of biological role, NDH-1 shuttles electrons from NADH, via FMN and iron-sulfur (Fe-S) centers, to quinones in the respiratory chain. The immediate electron acceptor for the enzyme in this species is believed to be ubiquinone. Couples the redox reaction to proton translocation (for every two electrons transferred, four hydrogen ions are translocated across the cytoplasmic membrane), and thus conserves the redox energy in a proton gradient. The chain is NADH-quinone oxidoreductase subunit I from Polaromonas sp. (strain JS666 / ATCC BAA-500).